Here is an 883-residue protein sequence, read N- to C-terminus: Chromatin structure-remodeling complex protein RSC30 (883 aa).

A DNA-binding region (zn(2)-C6 fungal-type) is located at residues 14 to 45; it reads ACTQCRKRKIGCDRAKPICGNCVKYNKPDCFY. Disordered stretches follow at residues 121-157 and 241-273; these read QNNN…DVPS and NTTA…TSRT. The span at 130-149 shows a compositional bias: polar residues; it reads APRQNSSTVSSNVHGNTIVR. Ser-150 is subject to Phosphoserine. Residues 241–251 show a composition bias toward polar residues; sequence NTTANKINKTG. Residues 252-270 are compositionally biased toward basic and acidic residues; the sequence is ENSKKGKVDGKRAGFDHQT.

In terms of assembly, forms a heteromer with RSC3. Interacts with NPL6. Component of the two forms of the RSC complex composed of at least either RSC1 or RSC2, and ARP7, ARP9, LDB7, NPL6, RSC3, RSC30, RSC4, RSC58, RSC6, RSC8, RSC9, SFH1, STH1, HTL1 and probably RTT102. The complexes interact with histone and histone variant components of centromeric chromatin. Component of a fungal-specific module (HTL1-LDB7-NPL6-RSC3-RSC30) within the RSC complex.

Its subcellular location is the nucleus. Its function is as follows. Component of the chromatin structure-remodeling complex (RSC), which is involved in transcription regulation and nucleosome positioning. RSC is responsible for the transfer of a histone octamer from a nucleosome core particle to naked DNA. The reaction requires ATP and involves an activated RSC-nucleosome intermediate. Remodeling reaction also involves DNA translocation, DNA twist and conformational change. As a reconfigurer of centromeric and flanking nucleosomes, RSC complex is required both for proper kinetochore function in chromosome segregation and, via a PKC1-dependent signaling pathway, for organization of the cellular cytoskeleton. This subunit is required for transcription of ribosomal protein genes and genes involved in the integrity of the cell wall. Together with HTL1, LDB7, NPL6, RSC3 components, defines a fungal-specific module within the RSC complex that plays a role in many cellular functions including the maintenance of cell wall integrity. The protein is Chromatin structure-remodeling complex protein RSC30 (RSC30) of Saccharomyces cerevisiae (strain ATCC 204508 / S288c) (Baker's yeast).